The primary structure comprises 172 residues: Auxin-responsive protein IAA30 (172 aa).

Positions 1 to 18 are enriched in low complexity; it reads MGRGRSSSSSSIESSCKS. The disordered stretch occupies residues 1 to 28; sequence MGRGRSSSSSSIESSCKSNPFGVSSSNT. Residues 35–39 carry the EAR-like (transcriptional repression) motif; it reads LRLGL. Residues 82–171 form the PB1 domain; that stretch reads SFYVKVNMEG…RRLKISRAYH (90 aa).

The protein belongs to the Aux/IAA family. In terms of assembly, homodimers and heterodimers.

It is found in the nucleus. Functionally, aux/IAA proteins are short-lived transcriptional factors that function as repressors of early auxin response genes at low auxin concentrations. Repression is thought to result from the interaction with auxin response factors (ARFs), proteins that bind to the auxin-responsive promoter element (AuxRE). Formation of heterodimers with ARF proteins may alter their ability to modulate early auxin response genes expression. This Arabidopsis thaliana (Mouse-ear cress) protein is Auxin-responsive protein IAA30 (IAA30).